We begin with the raw amino-acid sequence, 527 residues long: Bifunctional purine biosynthesis protein PurH (527 aa).

The region spanning 9–156 (MARKPIRRAL…KNHPSVAVVT (148 aa)) is the MGS-like domain.

This sequence belongs to the PurH family.

It carries out the reaction (6R)-10-formyltetrahydrofolate + 5-amino-1-(5-phospho-beta-D-ribosyl)imidazole-4-carboxamide = 5-formamido-1-(5-phospho-D-ribosyl)imidazole-4-carboxamide + (6S)-5,6,7,8-tetrahydrofolate. The enzyme catalyses IMP + H2O = 5-formamido-1-(5-phospho-D-ribosyl)imidazole-4-carboxamide. The protein operates within purine metabolism; IMP biosynthesis via de novo pathway; 5-formamido-1-(5-phospho-D-ribosyl)imidazole-4-carboxamide from 5-amino-1-(5-phospho-D-ribosyl)imidazole-4-carboxamide (10-formyl THF route): step 1/1. It participates in purine metabolism; IMP biosynthesis via de novo pathway; IMP from 5-formamido-1-(5-phospho-D-ribosyl)imidazole-4-carboxamide: step 1/1. The protein is Bifunctional purine biosynthesis protein PurH of Mycobacterium leprae (strain Br4923).